Reading from the N-terminus, the 81-residue chain is Alpha-toxin Ac1 (81 aa).

The signal sequence occupies residues 1–17 (YIVMISLALVVMIGVES). An LCN-type CS-alpha/beta domain is found at 19-80 (RDGYIVYPNN…PIKDPSQKCT (62 aa)). 4 disulfides stabilise this stretch: cysteine 29–cysteine 79, cysteine 33–cysteine 51, cysteine 37–cysteine 61, and cysteine 41–cysteine 63.

The protein belongs to the long (4 C-C) scorpion toxin superfamily. Sodium channel inhibitor family. Alpha subfamily. In terms of tissue distribution, expressed by the venom gland.

It localises to the secreted. In terms of biological role, alpha toxins bind voltage-independently at site-3 of sodium channels (Nav) and inhibit the inactivation of the activated channels, thereby blocking neuronal transmission. The chain is Alpha-toxin Ac1 from Androctonus crassicauda (Arabian fat-tailed scorpion).